The chain runs to 217 residues: Probable GTP-binding protein EngB (217 aa).

The region spanning G33–R217 is the EngB-type G domain. GTP is bound by residues G41–S48, G68–E72, D95–G98, T162–D165, and T196–S198. Mg(2+) is bound by residues S48 and T70.

This sequence belongs to the TRAFAC class TrmE-Era-EngA-EngB-Septin-like GTPase superfamily. EngB GTPase family. Requires Mg(2+) as cofactor.

Its function is as follows. Necessary for normal cell division and for the maintenance of normal septation. This chain is Probable GTP-binding protein EngB, found in Sinorhizobium medicae (strain WSM419) (Ensifer medicae).